We begin with the raw amino-acid sequence, 611 residues long: Probable Xaa-Pro aminopeptidase P (611 aa).

Positions 408, 419, 517, and 531 each coordinate Mn(2+).

The protein belongs to the peptidase M24B family. Mn(2+) is required as a cofactor.

It carries out the reaction Release of any N-terminal amino acid, including proline, that is linked to proline, even from a dipeptide or tripeptide.. In terms of biological role, catalyzes the removal of a penultimate prolyl residue from the N-termini of peptides. The sequence is that of Probable Xaa-Pro aminopeptidase P (AMPP) from Coccidioides posadasii (strain RMSCC 757 / Silveira) (Valley fever fungus).